The following is a 270-amino-acid chain: UPF0162 protein VC_2176 (270 aa).

The protein belongs to the UPF0162 family.

In Vibrio cholerae serotype O1 (strain ATCC 39315 / El Tor Inaba N16961), this protein is UPF0162 protein VC_2176.